The primary structure comprises 452 residues: NAD kinase 2, mitochondrial (452 aa).

The N-terminal 50 residues, 1-50, are a transit peptide targeting the mitochondrion; the sequence is MTCYRGFLLGSCRRVAGGRAALRGSGSGADGRRHLGHGQPRELAGGGSPA. A disordered region spans residues 23-52; it reads RGSGSGADGRRHLGHGQPRELAGGGSPADG. Lysine 64 carries the N6-acetyllysine; alternate modification. N6-succinyllysine; alternate is present on lysine 64. A Phosphoserine modification is found at serine 176. Lysine 312 is modified (N6-succinyllysine). Lysine 327 is modified (N6-acetyllysine; alternate). Lysine 327 carries the post-translational modification N6-succinyllysine; alternate. Serine 377 bears the Phosphoserine mark. N6-acetyllysine is present on lysine 407.

The protein belongs to the NAD kinase family. As to quaternary structure, homodimer.

Its subcellular location is the mitochondrion. The catalysed reaction is NAD(+) + ATP = ADP + NADP(+) + H(+). Its activity is regulated as follows. Inhibited by NADH, NADPH and NADP(+). Its function is as follows. Mitochondrial NAD(+) kinase that phosphorylates NAD(+) to yield NADP(+). Can use both ATP or inorganic polyphosphate as the phosphoryl donor. The protein is NAD kinase 2, mitochondrial (Nadk2) of Mus musculus (Mouse).